The chain runs to 107 residues: MTQPDMSQILAQAQQMQAQLQAAQQEILASSVVGDAANGLVTVTMSGSGEVTAVNIDPKVVDPEDVETLQDLVQGAFLDAHKKVADLAQEKMGPLSQGFGGDMGSLF.

Belongs to the YbaB/EbfC family. Homodimer.

It localises to the cytoplasm. It is found in the nucleoid. Binds to DNA and alters its conformation. May be involved in regulation of gene expression, nucleoid organization and DNA protection. This chain is Nucleoid-associated protein CE0210, found in Corynebacterium efficiens (strain DSM 44549 / YS-314 / AJ 12310 / JCM 11189 / NBRC 100395).